A 520-amino-acid polypeptide reads, in one-letter code: GMP synthase [glutamine-hydrolyzing] (520 aa).

A Glutamine amidotransferase type-1 domain is found at 9-202 (KILILDFGSQ…VRKICGCSGQ (194 aa)). Cysteine 86 functions as the Nucleophile in the catalytic mechanism. Catalysis depends on residues histidine 176 and glutamate 178. The GMPS ATP-PPase domain maps to 203 to 395 (WTPGHIIDDA…LGLPHQMVWR (193 aa)). Residue 230 to 236 (SGGVDSS) participates in ATP binding.

In terms of assembly, homodimer.

The catalysed reaction is XMP + L-glutamine + ATP + H2O = GMP + L-glutamate + AMP + diphosphate + 2 H(+). The protein operates within purine metabolism; GMP biosynthesis; GMP from XMP (L-Gln route): step 1/1. In terms of biological role, catalyzes the synthesis of GMP from XMP. This chain is GMP synthase [glutamine-hydrolyzing], found in Geobacter metallireducens (strain ATCC 53774 / DSM 7210 / GS-15).